Consider the following 343-residue polypeptide: Phospholipid phosphatase-related protein type 2 (343 aa).

The next 3 membrane-spanning stretches (helical) occupy residues 12-32, 69-89, and 129-149; these read FSIIPCFVFVESVLLGIVILL, VPPALVYALVTAGPTLTILLG, and FLGVYSFGLFTTTIFANAGQV. The N-linked (GlcNAc...) asparagine glycan is linked to Asn165. 3 consecutive transmembrane segments (helical) span residues 210–230, 239–259, and 266–286; these read AALCAYAVTYTAMYVTLVFRV, SLCLALLCPAFLVGVVRVAEY, and VLAGFLTGAAIATFLVTCVVH. The tract at residues 290-343 is disordered; it reads SRPPSGRRLSPWEDLGQAPTMDSPLEKNPRSAGRIRHRHGSPHPSRRTAPAVAT. Residues Ser299 and Ser312 each carry the phosphoserine modification. The span at 322–335 shows a compositional bias: basic residues; it reads GRIRHRHGSPHPSR.

Belongs to the PA-phosphatase related phosphoesterase family.

The protein resides in the membrane. This Homo sapiens (Human) protein is Phospholipid phosphatase-related protein type 2.